A 145-amino-acid polypeptide reads, in one-letter code: Cell division protein SepF (145 aa).

This sequence belongs to the SepF family. As to quaternary structure, homodimer. Interacts with FtsZ.

The protein resides in the cytoplasm. In terms of biological role, cell division protein that is part of the divisome complex and is recruited early to the Z-ring. Probably stimulates Z-ring formation, perhaps through the cross-linking of FtsZ protofilaments. Its function overlaps with FtsA. In Lactobacillus acidophilus (strain ATCC 700396 / NCK56 / N2 / NCFM), this protein is Cell division protein SepF.